The primary structure comprises 354 residues: Transcription activator of gluconeogenesis ERT1-1 (354 aa).

Residues 1–29 (MSFYPILRGPAKQESPPPPPAPKKRRKTA) form a disordered region. Residues 32-60 (CLHCQKAHLTCDEGRPCARCIKKNMGDQC) constitute a DNA-binding region (zn(2)-C6 fungal-type). 2 disordered regions span residues 71 to 111 (LVGL…FGSS) and 128 to 169 (DTSS…QGSP). Low complexity predominate over residues 81-98 (QATQQKQQQQQQQQQAVQ). Positions 159–169 (SQTAGTPQGSP) are enriched in polar residues.

Belongs to the ERT1/acuK family.

The protein resides in the nucleus. Functionally, transcription factor which regulates nonfermentable carbon utilization. Activator of gluconeogenetic genes. This is Transcription activator of gluconeogenesis ERT1-1 (ERT1-1) from Yarrowia lipolytica (strain CLIB 122 / E 150) (Yeast).